The sequence spans 176 residues: RNA pyrophosphohydrolase (176 aa).

Residues 6-149 enclose the Nudix hydrolase domain; sequence GYRPNVGIVI…KRDVYRRVMK (144 aa). The Nudix box motif lies at 38–59; sequence GGINPGESAEQAMYRELFEEVG.

Belongs to the Nudix hydrolase family. RppH subfamily. The cofactor is a divalent metal cation.

Its function is as follows. Accelerates the degradation of transcripts by removing pyrophosphate from the 5'-end of triphosphorylated RNA, leading to a more labile monophosphorylated state that can stimulate subsequent ribonuclease cleavage. This is RNA pyrophosphohydrolase from Shigella dysenteriae serotype 1 (strain Sd197).